The primary structure comprises 239 residues: Pyridoxine 5'-phosphate synthase (239 aa).

Asn-7 lines the 3-amino-2-oxopropyl phosphate pocket. 1-deoxy-D-xylulose 5-phosphate is bound at residue 9–10 (DH). Arg-18 serves as a coordination point for 3-amino-2-oxopropyl phosphate. The active-site Proton acceptor is His-43. Arg-45 and His-50 together coordinate 1-deoxy-D-xylulose 5-phosphate. Catalysis depends on Glu-70, which acts as the Proton acceptor. Thr-100 provides a ligand contact to 1-deoxy-D-xylulose 5-phosphate. His-191 (proton donor) is an active-site residue. 3-amino-2-oxopropyl phosphate contacts are provided by residues Gly-192 and 213 to 214 (GH).

This sequence belongs to the PNP synthase family. As to quaternary structure, homooctamer; tetramer of dimers.

The protein localises to the cytoplasm. The enzyme catalyses 3-amino-2-oxopropyl phosphate + 1-deoxy-D-xylulose 5-phosphate = pyridoxine 5'-phosphate + phosphate + 2 H2O + H(+). The protein operates within cofactor biosynthesis; pyridoxine 5'-phosphate biosynthesis; pyridoxine 5'-phosphate from D-erythrose 4-phosphate: step 5/5. In terms of biological role, catalyzes the complicated ring closure reaction between the two acyclic compounds 1-deoxy-D-xylulose-5-phosphate (DXP) and 3-amino-2-oxopropyl phosphate (1-amino-acetone-3-phosphate or AAP) to form pyridoxine 5'-phosphate (PNP) and inorganic phosphate. In Geotalea daltonii (strain DSM 22248 / JCM 15807 / FRC-32) (Geobacter daltonii), this protein is Pyridoxine 5'-phosphate synthase.